The following is a 159-amino-acid chain: Gigasin-1 (159 aa).

Disordered regions lie at residues 1-33 (GKAT…HDQT) and 80-159 (KESY…KYRR).

In terms of tissue distribution, component of the organic matrix of calcified shell layers.

This chain is Gigasin-1, found in Magallana gigas (Pacific oyster).